The chain runs to 272 residues: Tryptophan synthase alpha chain (272 aa).

Active-site proton acceptor residues include Glu-49 and Asp-60.

It belongs to the TrpA family. In terms of assembly, tetramer of two alpha and two beta chains.

The catalysed reaction is (1S,2R)-1-C-(indol-3-yl)glycerol 3-phosphate + L-serine = D-glyceraldehyde 3-phosphate + L-tryptophan + H2O. The protein operates within amino-acid biosynthesis; L-tryptophan biosynthesis; L-tryptophan from chorismate: step 5/5. The alpha subunit is responsible for the aldol cleavage of indoleglycerol phosphate to indole and glyceraldehyde 3-phosphate. The sequence is that of Tryptophan synthase alpha chain from Polaromonas naphthalenivorans (strain CJ2).